The chain runs to 2124 residues: Genome polyprotein (2124 aa).

A lipid anchor (N-myristoyl glycine; by host) is attached at glycine 2. The host EIF4E binding stretch occupies residues 873-880 (VARDLLLI). The SF3 helicase domain maps to 1102–1264 (VQIATYFRNF…SAATKNGKLD (163 aa)). 1130–1137 (GKPGVGKS) lines the ATP pocket. The span at 1415–1437 (DKPKEEEEEPEEKKEKKTEESKE) shows a compositional bias: basic and acidic residues. The segment at 1415 to 1446 (DKPKEEEEEPEEKKEKKTEESKEAAGPYNGPT) is disordered. At tyrosine 1442 the chain carries O-(5'-phospho-RNA)-tyrosine. The Peptidase C3 domain occupies 1459–1648 (SPLMDMEKKI…VGTRLTARMI (190 aa)). Active-site for protease 3C activity residues include histidine 1501, aspartate 1535, and cysteine 1612. Residues 1893 to 2011 (PYLYDFDYSN…ASKFELDLVM (119 aa)) enclose the RdRp catalytic domain. Active-site for RdRp activity residues include aspartate 1899 and aspartate 1997.

Belongs to the picornaviruses polyprotein family. As to quaternary structure, interacts with host EIF4E. In terms of assembly, interacts with host IFIH1/MDA5; this interaction inhibits the induction of the IFN-beta signal pathway. Post-translationally, specific enzymatic cleavages by the viral protease in vivo yield a variety of precursors and mature proteins. The polyprotein seems to be cotranslationally cleaved at the 2A/2B junction by a ribosomal skip from one codon to the next without formation of a peptide bond. This process would release the P1-2A peptide from the translational complex. During virion maturation, immature virions are rendered infectious following cleavage of VP0 into VP4 and VP2. This maturation seems to be an autocatalytic event triggered by the presence of RNA in the capsid and is followed by a conformational change of the particle. In terms of processing, myristoylation is required during RNA encapsidation and formation of the mature virus particle. Post-translationally, uridylylated by the polymerase and is covalently linked to the 5'-end of genomic RNA. This uridylylated form acts as a nucleotide-peptide primer for the polymerase.

It localises to the virion. It is found in the host cytoplasm. The protein resides in the host nucleus. The protein localises to the host nucleolus. Its subcellular location is the host cytoplasmic vesicle membrane. It catalyses the reaction RNA(n) + a ribonucleoside 5'-triphosphate = RNA(n+1) + diphosphate. The catalysed reaction is ATP + H2O = ADP + phosphate + H(+). It carries out the reaction Selective cleavage of Gln-|-Gly bond in the poliovirus polyprotein. In other picornavirus reactions Glu may be substituted for Gln, and Ser or Thr for Gly.. Functionally, forms an icosahedral capsid of pseudo T=3 symmetry with capsid proteins VP2 and VP3. Together they form an icosahedral capsid composed of 60 copies of each VP1, VP2, and VP3, with a diameter of approximately 300 Angstroms. VP4 lies on the inner surface of the protein shell formed by VP1, VP2 and VP3. All the three latter proteins contain a beta-sheet structure called beta-barrel jelly roll. VP1 is situated at the 12 fivefold axes, whereas VP2 and VP3 are located at the quasi-sixfold axes. Its function is as follows. Lies on the inner surface of the capsid shell. After binding to the host receptor, the capsid undergoes conformational changes. Capsid protein VP4 is released, capsid protein VP1 N-terminus is externalized, and together, they shape a pore in the host membrane through which the viral genome is translocated into the host cell cytoplasm. After genome has been released, the channel shrinks. In terms of biological role, VP0 precursor is a component of immature procapsids. Involved in host translation shutoff by inhibiting cap-dependent mRNA translation. Nuclear localization is required for this function. The resulting inhibition of cellular protein synthesis serves to ensure maximal viral gene expression and to evade host immune response. Functionally, affects membrane integrity and causes an increase in membrane permeability. Its function is as follows. Associates with and induces structural rearrangements of intracellular membranes. It displays RNA-binding, nucleotide binding and NTPase activities. Interacts with IFIH1/MDA5 to inhibit the induction of the IFN-beta signal pathway. In terms of biological role, serves as membrane anchor via its hydrophobic domain. Forms a primer, VPg-pU, which is utilized by the polymerase for the initiation of RNA chains. Functionally, cysteine protease that generates mature viral proteins from the precursor polyprotein. In addition to its proteolytic activity, it binds to viral RNA, and thus influences viral genome replication. RNA and substrate cooperatively bind to the protease. Cleaves host PABP1, this cleavage is important for viral replication. Cleaves host TANK and disrupts the TANK-TBK1-IKKepsilon-IRF3 complex, thereby inhibiting the induction of the IFN-beta signal pathway. Its function is as follows. Replicates the genomic and antigenomic RNAs by recognizing replications specific signals. Performs VPg uridylylation. This Cosavirus A (isolate Human/Pakistan/0553/-) (HCoSV-A) protein is Genome polyprotein.